The following is a 518-amino-acid chain: GMP synthase [glutamine-hydrolyzing] (518 aa).

In terms of domain architecture, Glutamine amidotransferase type-1 spans 6–200; sequence RLLIIDFGSQ…FVRLAGFKGD (195 aa). The active-site Nucleophile is the cysteine 84. Residues histidine 175 and glutamate 177 contribute to the active site. Positions 201 to 393 constitute a GMPS ATP-PPase domain; the sequence is WTMGAYREEA…LGLPESFIGR (193 aa). 228 to 234 serves as a coordination point for ATP; the sequence is SGGVDSS.

In terms of assembly, homodimer.

It carries out the reaction XMP + L-glutamine + ATP + H2O = GMP + L-glutamate + AMP + diphosphate + 2 H(+). It participates in purine metabolism; GMP biosynthesis; GMP from XMP (L-Gln route): step 1/1. Catalyzes the synthesis of GMP from XMP. This chain is GMP synthase [glutamine-hydrolyzing], found in Cereibacter sphaeroides (strain ATCC 17023 / DSM 158 / JCM 6121 / CCUG 31486 / LMG 2827 / NBRC 12203 / NCIMB 8253 / ATH 2.4.1.) (Rhodobacter sphaeroides).